Here is a 185-residue protein sequence, read N- to C-terminus: Ribosome-recycling factor (185 aa).

The protein belongs to the RRF family.

Its subcellular location is the cytoplasm. Functionally, responsible for the release of ribosomes from messenger RNA at the termination of protein biosynthesis. May increase the efficiency of translation by recycling ribosomes from one round of translation to another. Its function is as follows. Plays a role in sporulation. This is Ribosome-recycling factor from Bacillus subtilis (strain 168).